The following is a 377-amino-acid chain: Virion membrane protein A16 (377 aa).

Residue Gly-2 is the site of N-myristoyl glycine; by host attachment. The Virion surface portion of the chain corresponds to 2–341; sequence GAAVTLNRIK…VVKDKIKLPT (340 aa). The chain crosses the membrane as a helical; Signal-anchor for type II membrane protein span at residues 342–362; it reads WLGAAITLVVISVIFYFISIY. Topologically, residues 363–377 are intravirion; that stretch reads SRTKIKTNDINVRRR.

The protein belongs to the poxviridae A16/G9/J5 family. Part of a stable entry-fusion complex (EFC) which is at least composed of proteins A16, A21, A28, G3, G9, H2, J5, and L5. Formation of the viral membrane is necessary for the assembly of the complex. Interacts with G9. Most cysteines are linked by disulfide bonds. They are created by the viral disulfide bond formation pathway, a poxvirus-specific redox pathway that operates on the cytoplasmic side of the MV membranes.

The protein resides in the virion membrane. Functionally, envelope protein part of the entry-fusion complex responsible for the virus membrane fusion with host cell membrane during virus entry. Also plays a role in cell-cell fusion (syncytium formation). The sequence is that of Virion membrane protein A16 from Homo sapiens (Human).